The chain runs to 342 residues: Aromatic amino acid aminotransferase (342 aa).

Position 214 is an N6-(pyridoxal phosphate)lysine (K214).

The protein belongs to the class-II pyridoxal-phosphate-dependent aminotransferase family. As to quaternary structure, homodimer. It depends on pyridoxal 5'-phosphate as a cofactor.

It catalyses the reaction an aromatic L-alpha-amino acid + 2-oxoglutarate = an aromatic oxo-acid + L-glutamate. Aminotransferase that catalyzes the conversion of aromatic amino acids and 2-oxoglutarate into corresponding aromatic oxo acids and L-glutamate. The sequence is that of Aromatic amino acid aminotransferase from Corynebacterium efficiens (strain DSM 44549 / YS-314 / AJ 12310 / JCM 11189 / NBRC 100395).